We begin with the raw amino-acid sequence, 459 residues long: Taurine--pyruvate aminotransferase (459 aa).

Lys-287 carries the N6-(pyridoxal phosphate)lysine modification.

It belongs to the class-III pyridoxal-phosphate-dependent aminotransferase family. It depends on pyridoxal 5'-phosphate as a cofactor.

It localises to the cytoplasm. It catalyses the reaction taurine + pyruvate = sulfoacetaldehyde + L-alanine. It participates in organosulfur degradation; taurine degradation via aerobic pathway; acetyl phosphate and sulfite from taurine: step 1/2. Catalyzes the degradation of taurine into alanine and sulfoacetaldehyde. This chain is Taurine--pyruvate aminotransferase, found in Rhodobacter capsulatus (strain ATCC BAA-309 / NBRC 16581 / SB1003).